Here is a 220-residue protein sequence, read N- to C-terminus: MDSASQDINLNSPNKGVLSDFMTDVPVDPGVVHRTPVVEGLTEGEEEELRAELAKVEEEIVTLRQVLAAKERHCGELKRRLGLSTLGELKQNLSRSWHDVQVSTAYVKTSEKLGEWNEKVTQSDLYKKTQETLSQAGQKTSAALSTMGSAISRKLGDMSSYSIRHSISMPVMRNSATFKSFEDRVGTIKSKVVGGRENGSDNLPPSPGSGDQTLPDHAPF.

Methionine 1 is subject to N-acetylmethionine. Phosphoserine is present on residues serine 3, serine 12, and serine 19. Positions 40-82 (GLTEGEEEELRAELAKVEEEIVTLRQVLAAKERHCGELKRRLG) form a coiled coil. Phosphoserine occurs at positions 96, 149, 168, and 175. Threonine 177 carries the post-translational modification Phosphothreonine. A Phosphoserine modification is found at serine 180. Phosphothreonine is present on threonine 187. Residues 189 to 220 (KSKVVGGRENGSDNLPPSPGSGDQTLPDHAPF) are disordered. A phosphoserine mark is found at serine 206 and serine 209.

Belongs to the TPD52 family. Forms a homodimer or heterodimer with other members of the family. Interacts with MAL2.

The protein is Tumor protein D54 (Tpd52l2) of Mus musculus (Mouse).